A 406-amino-acid polypeptide reads, in one-letter code: MSIKKLDYWLIESLMDTDLYKITMLQAYYHAPEFRLVDIEWKFACRNRNGLDLSILIPEIFRQLEHLCTLSFSDAELDYLAGFSFIKPDFIEFLRIFRLDMRFVHIEAKGEDISLRFSGPLLHVSLLEIYTLAIISELHTFVNCGGIDLKVARERLAEKIAYLKAEDDLSGFSFADFGTRRRASKAWHEEVLLTLKEQLPASFSGTSSLHFARTLGLPPIGTMAHEWFQSWQAVTRLADAQKAALEGWVQEYRGRLGIALTDCYSMDSFIRDFSDPYFGKLYDGLRHDSGCPFVWAEKAILMYQQMGIDPLSKTLVFSDGLNFPRMLEIWKRFKGRAKISFGIGTNLTNDVGNVPLNIVIKMIAANGRPIAKISDEPGKSMCEDLGYLQYLASQYGIDPSLVKISQ.

Position 225 is a phosphohistidine; by autocatalysis (His225).

Belongs to the NAPRTase family. Transiently phosphorylated on a His residue during the reaction cycle. Phosphorylation strongly increases the affinity for substrates and increases the rate of nicotinate D-ribonucleotide production. Dephosphorylation regenerates the low-affinity form of the enzyme, leading to product release.

It catalyses the reaction nicotinate + 5-phospho-alpha-D-ribose 1-diphosphate + ATP + H2O = nicotinate beta-D-ribonucleotide + ADP + phosphate + diphosphate. The protein operates within cofactor biosynthesis; NAD(+) biosynthesis; nicotinate D-ribonucleotide from nicotinate: step 1/1. In terms of biological role, catalyzes the synthesis of beta-nicotinate D-ribonucleotide from nicotinate and 5-phospho-D-ribose 1-phosphate at the expense of ATP. The polypeptide is Nicotinate phosphoribosyltransferase (Psychromonas ingrahamii (strain DSM 17664 / CCUG 51855 / 37)).